Here is a 724-residue protein sequence, read N- to C-terminus: Outer spore wall protein 2 (724 aa).

2 disordered regions span residues 407-427 (NSGQDFTDGDNEDQDKGKNRV) and 477-497 (TSGGQKRVKSPTKADTGYDDK).

The protein localises to the cytoplasm. It is found in the prospore membrane. Its function is as follows. May be involved in a late step of spore wall assembly. The sequence is that of Outer spore wall protein 2 (OSW2) from Saccharomyces cerevisiae (strain ATCC 204508 / S288c) (Baker's yeast).